A 193-amino-acid chain; its full sequence is Ectoine TRAP transporter small permease protein TeaB (193 aa).

Helical transmembrane passes span 33 to 55 (ILAL…RFAL), 65 to 82 (VNRI…GYAA), 103 to 125 (RALM…YYSV), and 145 to 167 (IFII…LFTA).

It belongs to the TRAP transporter small permease family. As to quaternary structure, the complex comprises the extracytoplasmic solute receptor protein TeaA, and the two transmembrane proteins TeaB and TeaC.

The protein localises to the cell inner membrane. Functionally, part of the tripartite ATP-independent periplasmic (TRAP) transport system TeaABC involved in the uptake of ectoine and hydroxyectoine in response to osmotic upshock. Probably functions as a recovery system for synthesized ectoine that leaks out of the cell. In Halomonas elongata (strain ATCC 33173 / DSM 2581 / NBRC 15536 / NCIMB 2198 / 1H9), this protein is Ectoine TRAP transporter small permease protein TeaB (teaB).